The primary structure comprises 645 residues: Alkyldihydroxyacetonephosphate synthase, peroxisomal (645 aa).

Over residues 1–10 the composition is skewed to low complexity; sequence MAEAAAGEAG. A peroxisome-targeting transit peptide spans 1–45; the sequence is MAEAAAGEAGASERDPDAGRARRRLRVLSGHLLGRPQEAPSTNEC. The segment at 1-72 is disordered; sequence MAEAAAGEAG…AAPESGTIPK (72 aa). Over residues 11–20 the composition is skewed to basic and acidic residues; sequence ASERDPDAGR. Residues 50–69 are compositionally biased toward low complexity; sequence AASAAGASPAATPAAPESGT. A phosphoserine mark is found at S52 and S57. T61 carries the post-translational modification Phosphothreonine. Residue K89 is modified to N6-acetyllysine. Residues 189–371 enclose the FAD-binding PCMH-type domain; that stretch reads FERIPDIVVW…TEATIKIRPT (183 aa). Residues 221 to 227, 290 to 296, and 303 to 306 contribute to the FAD site; these read PIGGGTS, DSLEFST, and TRAS. K334 carries the post-translational modification N6-acetyllysine. Residue 355 to 361 participates in FAD binding; that stretch reads EGTLGVI. R502 serves as a coordination point for substrate. The Proton donor/acceptor role is filled by Y565. 2 important for enzyme activity regions span residues 602 to 604 and 641 to 645; these read HHH and NRNLL.

The protein belongs to the FAD-binding oxidoreductase/transferase type 4 family. As to quaternary structure, homodimer. It depends on FAD as a cofactor.

It localises to the peroxisome membrane. The protein localises to the peroxisome. The enzyme catalyses a long chain fatty alcohol + a 1-acylglycerone 3-phosphate = a 1-O-alkylglycerone 3-phosphate + a long-chain fatty acid + H(+). The catalysed reaction is hexadecan-1-ol + 1-hexadecanoylglycerone 3-phosphate = 1-O-hexadecylglycerone 3-phosphate + hexadecanoate + H(+). It carries out the reaction 1-hexadecanoylglycerone 3-phosphate + a long-chain fatty acid = a 1-acylglycerone 3-phosphate + hexadecanoate. It participates in glycerolipid metabolism; ether lipid biosynthesis. In terms of biological role, catalyzes the exchange of the acyl chain in acyl-dihydroxyacetonephosphate (acyl-DHAP) for a long chain fatty alcohol, yielding the first ether linked intermediate, i.e. alkyl-dihydroxyacetonephosphate (alkyl-DHAP), in the pathway of ether lipid biosynthesis. The sequence is that of Alkyldihydroxyacetonephosphate synthase, peroxisomal (Agps) from Mus musculus (Mouse).